A 186-amino-acid polypeptide reads, in one-letter code: ATP synthase subunit delta (186 aa).

This sequence belongs to the ATPase delta chain family. F-type ATPases have 2 components, F(1) - the catalytic core - and F(0) - the membrane proton channel. F(1) has five subunits: alpha(3), beta(3), gamma(1), delta(1), epsilon(1). F(0) has three main subunits: a(1), b(2) and c(10-14). The alpha and beta chains form an alternating ring which encloses part of the gamma chain. F(1) is attached to F(0) by a central stalk formed by the gamma and epsilon chains, while a peripheral stalk is formed by the delta and b chains.

Its subcellular location is the cell inner membrane. Functionally, f(1)F(0) ATP synthase produces ATP from ADP in the presence of a proton or sodium gradient. F-type ATPases consist of two structural domains, F(1) containing the extramembraneous catalytic core and F(0) containing the membrane proton channel, linked together by a central stalk and a peripheral stalk. During catalysis, ATP synthesis in the catalytic domain of F(1) is coupled via a rotary mechanism of the central stalk subunits to proton translocation. This protein is part of the stalk that links CF(0) to CF(1). It either transmits conformational changes from CF(0) to CF(1) or is implicated in proton conduction. The protein is ATP synthase subunit delta of Brucella suis biovar 1 (strain 1330).